The chain runs to 569 residues: Potassium-transporting ATPase potassium-binding subunit (569 aa).

10 consecutive transmembrane segments (helical) span residues Leu3–Leu23, Ala68–Leu88, Val136–Val156, Val179–Val199, Leu259–Val279, His284–Tyr304, Gly384–Gly404, Ala422–Val442, Leu490–Gly510, and Leu534–Leu554.

The protein belongs to the KdpA family. As to quaternary structure, the system is composed of three essential subunits: KdpA, KdpB and KdpC.

Its subcellular location is the cell inner membrane. In terms of biological role, part of the high-affinity ATP-driven potassium transport (or Kdp) system, which catalyzes the hydrolysis of ATP coupled with the electrogenic transport of potassium into the cytoplasm. This subunit binds the periplasmic potassium ions and delivers the ions to the membrane domain of KdpB through an intramembrane tunnel. This is Potassium-transporting ATPase potassium-binding subunit from Nitratidesulfovibrio vulgaris (strain DP4) (Desulfovibrio vulgaris).